Here is a 164-residue protein sequence, read N- to C-terminus: Endoribonuclease YbeY (164 aa).

3 residues coordinate Zn(2+): His-111, His-115, and His-121. The interval 140-164 (ELGHPDPYADDDAQKHSTVTIKDSE) is disordered. Polar residues predominate over residues 155–164 (HSTVTIKDSE).

Belongs to the endoribonuclease YbeY family. It depends on Zn(2+) as a cofactor.

It localises to the cytoplasm. In terms of biological role, single strand-specific metallo-endoribonuclease involved in late-stage 70S ribosome quality control and in maturation of the 3' terminus of the 16S rRNA. The protein is Endoribonuclease YbeY of Pseudomonas fluorescens (strain SBW25).